A 213-amino-acid chain; its full sequence is Large ribosomal subunit protein uL3 (213 aa).

Gln151 is modified (N5-methylglutamine).

The protein belongs to the universal ribosomal protein uL3 family. Part of the 50S ribosomal subunit. Forms a cluster with proteins L14 and L19. Methylated by PrmB.

Its function is as follows. One of the primary rRNA binding proteins, it binds directly near the 3'-end of the 23S rRNA, where it nucleates assembly of the 50S subunit. The chain is Large ribosomal subunit protein uL3 from Rhizobium leguminosarum bv. trifolii (strain WSM2304).